The primary structure comprises 376 residues: Chaperone protein DnaJ (376 aa).

One can recognise a J domain in the interval D5–G70. The segment at G131–S209 adopts a CR-type zinc-finger fold. The Zn(2+) site is built by C144, C147, C161, C164, C183, C186, C197, and C200. CXXCXGXG motif repeat units follow at residues C144–G151, C161–G168, C183–G190, and C197–G204.

It belongs to the DnaJ family. In terms of assembly, homodimer. Requires Zn(2+) as cofactor.

The protein resides in the cytoplasm. Participates actively in the response to hyperosmotic and heat shock by preventing the aggregation of stress-denatured proteins and by disaggregating proteins, also in an autonomous, DnaK-independent fashion. Unfolded proteins bind initially to DnaJ; upon interaction with the DnaJ-bound protein, DnaK hydrolyzes its bound ATP, resulting in the formation of a stable complex. GrpE releases ADP from DnaK; ATP binding to DnaK triggers the release of the substrate protein, thus completing the reaction cycle. Several rounds of ATP-dependent interactions between DnaJ, DnaK and GrpE are required for fully efficient folding. Also involved, together with DnaK and GrpE, in the DNA replication of plasmids through activation of initiation proteins. The protein is Chaperone protein DnaJ of Shigella boydii serotype 18 (strain CDC 3083-94 / BS512).